The sequence spans 371 residues: Bifunctional enzyme IspD/IspF (371 aa).

Residues 1-210 form a 2-C-methyl-D-erythritol 4-phosphate cytidylyltransferase region; it reads MSEMSLIMLA…LNLPTPSFEI (210 aa). Residues 211 to 371 form a 2-C-methyl-D-erythritol 2,4-cyclodiphosphate synthase region; sequence FTGNGFDVHE…NLKYFDWTRL (161 aa). Positions 217 and 219 each coordinate a divalent metal cation. 4-CDP-2-C-methyl-D-erythritol 2-phosphate-binding positions include 217-219 and 243-244; these read DVH and HS. Position 251 (His251) interacts with a divalent metal cation. Residues 265-267, 270-274, 341-344, Phe348, and Arg351 each bind 4-CDP-2-C-methyl-D-erythritol 2-phosphate; these read DIG, YPDTD, and TTTE.

The protein in the N-terminal section; belongs to the IspD/TarI cytidylyltransferase family. IspD subfamily. It in the C-terminal section; belongs to the IspF family. Requires a divalent metal cation as cofactor.

The enzyme catalyses 2-C-methyl-D-erythritol 4-phosphate + CTP + H(+) = 4-CDP-2-C-methyl-D-erythritol + diphosphate. The catalysed reaction is 4-CDP-2-C-methyl-D-erythritol 2-phosphate = 2-C-methyl-D-erythritol 2,4-cyclic diphosphate + CMP. Its pathway is isoprenoid biosynthesis; isopentenyl diphosphate biosynthesis via DXP pathway; isopentenyl diphosphate from 1-deoxy-D-xylulose 5-phosphate: step 2/6. It functions in the pathway isoprenoid biosynthesis; isopentenyl diphosphate biosynthesis via DXP pathway; isopentenyl diphosphate from 1-deoxy-D-xylulose 5-phosphate: step 4/6. Bifunctional enzyme that catalyzes the formation of 4-diphosphocytidyl-2-C-methyl-D-erythritol from CTP and 2-C-methyl-D-erythritol 4-phosphate (MEP) (IspD), and catalyzes the conversion of 4-diphosphocytidyl-2-C-methyl-D-erythritol 2-phosphate (CDP-ME2P) to 2-C-methyl-D-erythritol 2,4-cyclodiphosphate (ME-CPP) with a corresponding release of cytidine 5-monophosphate (CMP) (IspF). The polypeptide is Bifunctional enzyme IspD/IspF (Campylobacter jejuni (strain RM1221)).